A 393-amino-acid polypeptide reads, in one-letter code: Lipid-A-disaccharide synthase (393 aa).

It belongs to the LpxB family.

The enzyme catalyses a lipid X + a UDP-2-N,3-O-bis[(3R)-3-hydroxyacyl]-alpha-D-glucosamine = a lipid A disaccharide + UDP + H(+). It participates in bacterial outer membrane biogenesis; LPS lipid A biosynthesis. Condensation of UDP-2,3-diacylglucosamine and 2,3-diacylglucosamine-1-phosphate to form lipid A disaccharide, a precursor of lipid A, a phosphorylated glycolipid that anchors the lipopolysaccharide to the outer membrane of the cell. This chain is Lipid-A-disaccharide synthase, found in Bordetella petrii (strain ATCC BAA-461 / DSM 12804 / CCUG 43448).